The following is a 92-amino-acid chain: Small ribosomal subunit protein uS19 (92 aa).

The protein belongs to the universal ribosomal protein uS19 family.

Functionally, protein S19 forms a complex with S13 that binds strongly to the 16S ribosomal RNA. The protein is Small ribosomal subunit protein uS19 of Xanthobacter autotrophicus (strain ATCC BAA-1158 / Py2).